We begin with the raw amino-acid sequence, 211 residues long: MTRVALTSAVNLAKKLHDAGIRNQAVLKAISHTPREMFLDNALAHKAYENTALPIGQGQTISQPYIVARMTELLLHKMPQRVLEVGTGSGYQAAILAQLVPQLCTIERIKGLQIQARQRLKRLDLHNVSFKYGDGWLGWANRSPFDAIMVTAAASTIPEALLSQLAEGGVLVLPVGEDTQQLMRITRTADRFSSETIETVKFVPLINGELA.

The active site involves serine 62.

It belongs to the methyltransferase superfamily. L-isoaspartyl/D-aspartyl protein methyltransferase family.

The protein localises to the cytoplasm. The catalysed reaction is [protein]-L-isoaspartate + S-adenosyl-L-methionine = [protein]-L-isoaspartate alpha-methyl ester + S-adenosyl-L-homocysteine. In terms of biological role, catalyzes the methyl esterification of L-isoaspartyl residues in peptides and proteins that result from spontaneous decomposition of normal L-aspartyl and L-asparaginyl residues. It plays a role in the repair and/or degradation of damaged proteins. The protein is Protein-L-isoaspartate O-methyltransferase of Shewanella baltica (strain OS223).